Reading from the N-terminus, the 555-residue chain is Trehalase (555 aa).

The N-terminal stretch at 1–16 is a signal peptide; it reads MIPFLLMVAFADTVLQ. The N-linked (GlcNAc...) asparagine glycan is linked to Asn-46. Residues Arg-164, 171–172, and Asn-208 contribute to the substrate site; that span reads WD. Asn-216 carries an N-linked (GlcNAc...) asparagine glycan. Residues 217 to 219, 282 to 284, and Gly-316 contribute to the substrate site; these read RSQ and RPE. Asp-318 acts as the Proton donor/acceptor in catalysis. Asn-334 and Asn-371 each carry an N-linked (GlcNAc...) asparagine glycan. Glu-516 serves as the catalytic Proton donor/acceptor. Residue Glu-531 participates in substrate binding.

The protein belongs to the glycosyl hydrolase 37 family. In terms of tissue distribution, bean-shaped accessory glands (bags).

Its subcellular location is the secreted. The enzyme catalyses alpha,alpha-trehalose + H2O = alpha-D-glucose + beta-D-glucose. The protein is Trehalase of Tenebrio molitor (Yellow mealworm beetle).